A 123-amino-acid chain; its full sequence is Small ribosomal subunit protein uS12 (123 aa).

The tract at residues 1–29 (MPTINQLVRKGRVPQKAKSKVPAMEQNPQ) is disordered. The segment covering 9-19 (RKGRVPQKAKS) has biased composition (basic residues). D89 is modified (3-methylthioaspartic acid).

It belongs to the universal ribosomal protein uS12 family. In terms of assembly, part of the 30S ribosomal subunit. Contacts proteins S8 and S17. May interact with IF1 in the 30S initiation complex.

In terms of biological role, with S4 and S5 plays an important role in translational accuracy. Functionally, interacts with and stabilizes bases of the 16S rRNA that are involved in tRNA selection in the A site and with the mRNA backbone. Located at the interface of the 30S and 50S subunits, it traverses the body of the 30S subunit contacting proteins on the other side and probably holding the rRNA structure together. The combined cluster of proteins S8, S12 and S17 appears to hold together the shoulder and platform of the 30S subunit. This chain is Small ribosomal subunit protein uS12, found in Erythrobacter litoralis (strain HTCC2594).